The chain runs to 450 residues: Regulator of sigma E protease (450 aa).

A Zn(2+)-binding site is contributed by His-22. The active site involves Glu-23. A Zn(2+)-binding site is contributed by His-26. A helical membrane pass occupies residues 98 to 120 (AAIIAAGPVANFIFAIFAYWLVF). 2 PDZ domains span residues 115 to 186 (AYWL…APFG) and 199 to 291 (HWAF…TPDT). The next 2 helical transmembrane spans lie at 376 to 398 (VIYY…LFPL) and 426 to 445 (FSYR…ALFN).

It belongs to the peptidase M50B family. In terms of assembly, interacts with RseA. Zn(2+) serves as cofactor.

It localises to the cell inner membrane. Its function is as follows. A site-2 regulated intramembrane protease (S2P) that cleaves the peptide bond between 'Ala-108' and 'Cys-109' in the transmembrane region of RseA. Part of a regulated intramembrane proteolysis (RIP) cascade. Acts on DegS-cleaved RseA to release the cytoplasmic domain of RseA. This provides the cell with sigma-E (RpoE) activity through the proteolysis of RseA. The sequence is that of Regulator of sigma E protease (rseP) from Salmonella typhi.